A 450-amino-acid polypeptide reads, in one-letter code: Putative mediator of RNA polymerase II transcription subunit 27 (450 aa).

Positions 15–118 (QQQQAQQHQQ…QKLKKSMDLV (104 aa)) form a coiled coil.

Belongs to the Mediator complex subunit 27 family. As to quaternary structure, component of the Mediator complex.

The protein localises to the nucleus. In terms of biological role, component of the Mediator complex, a coactivator involved in the regulated transcription of nearly all RNA polymerase II-dependent genes. Mediator functions as a bridge to convey information from gene-specific regulatory proteins to the basal RNA polymerase II transcription machinery. Mediator is recruited to promoters by direct interactions with regulatory proteins and serves as a scaffold for the assembly of a functional preinitiation complex with RNA polymerase II and the general transcription factors. The protein is Putative mediator of RNA polymerase II transcription subunit 27 (med27) of Dictyostelium discoideum (Social amoeba).